The chain runs to 429 residues: Phosphoribosylamine--glycine ligase (429 aa).

Residues 109–316 enclose the ATP-grasp domain; that stretch reads KDFLARHQIP…LVDLCLAACD (208 aa). 135–196 contributes to the ATP binding site; it reads LREKGAPIVI…EEFLDGEEAS (62 aa). 2 residues coordinate Mg(2+): glutamate 286 and asparagine 288.

The protein belongs to the GARS family. As to quaternary structure, monomer. Requires Mg(2+) as cofactor. The cofactor is Mn(2+).

The enzyme catalyses 5-phospho-beta-D-ribosylamine + glycine + ATP = N(1)-(5-phospho-beta-D-ribosyl)glycinamide + ADP + phosphate + H(+). The protein operates within purine metabolism; IMP biosynthesis via de novo pathway; N(1)-(5-phospho-D-ribosyl)glycinamide from 5-phospho-alpha-D-ribose 1-diphosphate: step 2/2. The protein is Phosphoribosylamine--glycine ligase of Salmonella typhimurium (strain LT2 / SGSC1412 / ATCC 700720).